Consider the following 93-residue polypeptide: Large ribosomal subunit protein uL23 (93 aa).

Belongs to the universal ribosomal protein uL23 family. Part of the 50S ribosomal subunit. Contacts protein L29, and trigger factor when it is bound to the ribosome.

One of the early assembly proteins it binds 23S rRNA. One of the proteins that surrounds the polypeptide exit tunnel on the outside of the ribosome. Forms the main docking site for trigger factor binding to the ribosome. This Sulfurovum sp. (strain NBC37-1) protein is Large ribosomal subunit protein uL23.